We begin with the raw amino-acid sequence, 406 residues long: Solute carrier family 22 member 18 (406 aa).

The next 10 helical transmembrane spans lie at 8–28 (GIII…FMQF), 43–63 (VSFG…GPVF), 85–105 (ALYL…FLLF), 140–160 (LGLC…TLNT), 168–188 (AILA…CVPA), 226–246 (FLVK…FSII), 258–278 (AGYL…LVIG), 295–315 (LVFA…HFCF), 316–336 (LMPG…SMLT), and 374–394 (GVPI…LVLW).

The protein belongs to the major facilitator (TC 2.A.1) superfamily. Organic cation transporter (TC 2.A.1.19) family. As to quaternary structure, interacts with RNF167. Expressed at high levels in fetal and adult kidney and liver, and extraembryonic membranes (yolk sac). Expressed at moderate levels in intestine, heart, lung and testis.

It localises to the apical cell membrane. Functionally, may act as a transporter of organic cations based on a proton efflux antiport mechanism. May play a role in the transport of chloroquine and quinidine-related compounds in kidney. Plays a role in the regulation of lipid metabolism. The polypeptide is Solute carrier family 22 member 18 (Slc67a1) (Mus musculus (Mouse)).